Here is a 718-residue protein sequence, read N- to C-terminus: Exostosin-2 (718 aa).

The Cytoplasmic segment spans residues 1–25 (MCASVKSNIRGPALIPRMKTKHRIY). A helical; Signal-anchor for type II membrane protein transmembrane segment spans residues 26–46 (YVTLFSIVLLGLIATGMFQFW). Over 47–718 (PHSIESSSDG…LKSFPNIGSL (672 aa)) the chain is Lumenal. Cystine bridges form between C85/C90, C96/C151, C286/C300, and C318/C339. The N-linked (GlcNAc...) asparagine glycan is linked to N288. Residues L461, R465, N490, and N517 each coordinate UDP. Residues R465, N490, N517, R522, D538, D539, and D540 each coordinate UDP-N-acetyl-alpha-D-glucosamine. Residues D538 and D539 each contribute to the UDP site. D540 serves as a coordination point for Mn(2+). A protein contacts are provided by Y582 and S584. C626 and C676 are joined by a disulfide. Residues E627 and D628 each contribute to the UDP-N-acetyl-alpha-D-glucosamine site. N637 carries an N-linked (GlcNAc...) asparagine glycan. Residues K651 and K653 each contribute to the a protein site. R673 contacts UDP-N-acetyl-alpha-D-glucosamine.

Belongs to the glycosyltransferase 47 family. Part of the heparan sulfate polymerase, a dimeric complex composed of EXT1 and EXT2. Could also form homooligomeric complexes. Interacts with NDST1. Interacts with GALNT5. Requires Mn(2+) as cofactor. N-glycosylated at Asn-637. Post-translationally, a soluble form is generated by proteolytic processing. In terms of tissue distribution, expressed in heart, brain, spleen, lung, liver, skeletal muscle and testis. Heart shows a high expression.

It localises to the golgi apparatus membrane. It is found in the golgi apparatus. Its subcellular location is the cis-Golgi network membrane. The protein localises to the endoplasmic reticulum membrane. The protein resides in the secreted. The enzyme catalyses 3-O-{[(1-&gt;4)-beta-D-GlcA-(1-&gt;4)-alpha-D-GlcNAc](n)-(1-&gt;4)-beta-D-GlcA-(1-&gt;3)-beta-D-Gal-(1-&gt;3)-beta-D-Gal-(1-&gt;4)-beta-D-Xyl}-L-seryl-[protein] + UDP-N-acetyl-alpha-D-glucosamine = 3-O-{alpha-D-GlcNAc-[(1-&gt;4)-beta-D-GlcA-(1-&gt;4)-alpha-D-GlcNAc](n)-(1-&gt;4)-beta-D-GlcA-(1-&gt;3)-beta-D-Gal-(1-&gt;3)-beta-D-Gal-(1-&gt;4)-beta-D-Xyl}-L-seryl-[protein] + UDP + H(+). It functions in the pathway protein modification; protein glycosylation. Functionally, glycosyltransferase forming with EXT1 the heterodimeric heparan sulfate polymerase which catalyzes the elongation of the heparan sulfate glycan backbone. Glycan backbone extension consists in the alternating transfer of (1-&gt;4)-beta-D-GlcA and (1-&gt;4)-alpha-D-GlcNAc residues from their respective UDP-sugar donors. Both EXT1 and EXT2 are required for the full activity of the polymerase since EXT1 bears the N-acetylglucosaminyl-proteoglycan 4-beta-glucuronosyltransferase activity within the complex while EXT2 carries the glucuronosyl-N-acetylglucosaminyl-proteoglycan 4-alpha-N-acetylglucosaminyltransferase activity. Heparan sulfate proteoglycans are ubiquitous components of the extracellular matrix and play an important role in tissue homeostasis and signaling. This Mus musculus (Mouse) protein is Exostosin-2.